The chain runs to 494 residues: 3-octaprenyl-4-hydroxybenzoate carboxy-lyase (494 aa).

Mn(2+) is bound at residue N172. Prenylated FMN is bound by residues 175–177 (IYR), 189–191 (RWL), and 194–195 (RG). E238 serves as a coordination point for Mn(2+). The Proton donor role is filled by D287.

This sequence belongs to the UbiD family. As to quaternary structure, homohexamer. Prenylated FMN serves as cofactor. The cofactor is Mn(2+).

Its subcellular location is the cell membrane. The catalysed reaction is a 4-hydroxy-3-(all-trans-polyprenyl)benzoate + H(+) = a 2-(all-trans-polyprenyl)phenol + CO2. It functions in the pathway cofactor biosynthesis; ubiquinone biosynthesis. In terms of biological role, catalyzes the decarboxylation of 3-octaprenyl-4-hydroxy benzoate to 2-octaprenylphenol, an intermediate step in ubiquinone biosynthesis. The chain is 3-octaprenyl-4-hydroxybenzoate carboxy-lyase from Escherichia coli O9:H4 (strain HS).